Reading from the N-terminus, the 623-residue chain is tRNA uridine 5-carboxymethylaminomethyl modification enzyme MnmG (623 aa).

10–15 (GGGHAG) is an FAD binding site. Residue 269–283 (GPRYCPSIEDKIVRF) participates in NAD(+) binding.

This sequence belongs to the MnmG family. In terms of assembly, homodimer. Heterotetramer of two MnmE and two MnmG subunits. The cofactor is FAD.

The protein localises to the cytoplasm. NAD-binding protein involved in the addition of a carboxymethylaminomethyl (cmnm) group at the wobble position (U34) of certain tRNAs, forming tRNA-cmnm(5)s(2)U34. This chain is tRNA uridine 5-carboxymethylaminomethyl modification enzyme MnmG, found in Rhizobium meliloti (strain 1021) (Ensifer meliloti).